A 600-amino-acid chain; its full sequence is UvrABC system protein C (600 aa).

A GIY-YIG domain is found at 15–100; that stretch reads NSAGVYQYFN…IKQLHPKYNI (86 aa). Residues 203-238 enclose the UVR domain; sequence SVLLKNLEKQMLVLAQNENYEEAAKVRDQIAMIKDL.

The protein belongs to the UvrC family. Interacts with UvrB in an incision complex.

It is found in the cytoplasm. Functionally, the UvrABC repair system catalyzes the recognition and processing of DNA lesions. UvrC both incises the 5' and 3' sides of the lesion. The N-terminal half is responsible for the 3' incision and the C-terminal half is responsible for the 5' incision. The sequence is that of UvrABC system protein C from Campylobacter jejuni (strain RM1221).